A 203-amino-acid polypeptide reads, in one-letter code: ATP-dependent Clp protease proteolytic subunit 2 (203 aa).

The active-site Nucleophile is the Ser98. The active site involves His123.

The protein belongs to the peptidase S14 family. In terms of assembly, fourteen ClpP subunits assemble into 2 heptameric rings which stack back to back to give a disk-like structure with a central cavity, resembling the structure of eukaryotic proteasomes.

Its subcellular location is the cytoplasm. The catalysed reaction is Hydrolysis of proteins to small peptides in the presence of ATP and magnesium. alpha-casein is the usual test substrate. In the absence of ATP, only oligopeptides shorter than five residues are hydrolyzed (such as succinyl-Leu-Tyr-|-NHMec, and Leu-Tyr-Leu-|-Tyr-Trp, in which cleavage of the -Tyr-|-Leu- and -Tyr-|-Trp bonds also occurs).. Functionally, cleaves peptides in various proteins in a process that requires ATP hydrolysis. Has a chymotrypsin-like activity. Plays a major role in the degradation of misfolded proteins. This Chlamydia trachomatis serovar A (strain ATCC VR-571B / DSM 19440 / HAR-13) protein is ATP-dependent Clp protease proteolytic subunit 2.